The following is a 464-amino-acid chain: Glycine--tRNA ligase (464 aa).

Positions 104 and 175 each coordinate substrate. Residues 207–209, 217–222, 292–293, and 336–339 each bind ATP; these read RNE, FRTREF, EL, and GVNR. A substrate-binding site is contributed by 222 to 226; that stretch reads FEQME. 332–336 is a substrate binding site; sequence EPALG.

The protein belongs to the class-II aminoacyl-tRNA synthetase family. In terms of assembly, homodimer.

It localises to the cytoplasm. The catalysed reaction is tRNA(Gly) + glycine + ATP = glycyl-tRNA(Gly) + AMP + diphosphate. Its function is as follows. Catalyzes the attachment of glycine to tRNA(Gly). The chain is Glycine--tRNA ligase from Leptospira borgpetersenii serovar Hardjo-bovis (strain JB197).